The sequence spans 120 residues: MPRSVNAVASKKHRKKILNFAKGFYGARSKLYTVAKNAVEKSFKYSYFGRKNKKRNFRKLWIKRINAAARENGISYSNLIFLIRKNNIKLNRKCLADLAMKNNSSFKKMIKKFQILYLDL.

Belongs to the bacterial ribosomal protein bL20 family.

In terms of biological role, binds directly to 23S ribosomal RNA and is necessary for the in vitro assembly process of the 50S ribosomal subunit. It is not involved in the protein synthesizing functions of that subunit. The chain is Large ribosomal subunit protein bL20 from Karelsulcia muelleri (strain GWSS) (Sulcia muelleri).